A 439-amino-acid chain; its full sequence is Serine/threonine-protein kinase 2 (439 aa).

The Protein kinase domain occupies 87–439; the sequence is NDDFYHISTG…IFSDWINGGN (353 aa). ATP contacts are provided by residues 93-101 and Lys-117; that span reads ISTGGYGIV. Asp-307 acts as the Proton acceptor in catalysis.

This sequence belongs to the protein kinase superfamily. Ser/Thr protein kinase family. Poxviruses subfamily. Post-translationally, phosphorylated in vivo. Autophosphorylated in vitro.

The protein localises to the host endoplasmic reticulum. It is found in the host endoplasmic reticulum-Golgi intermediate compartment. It carries out the reaction L-seryl-[protein] + ATP = O-phospho-L-seryl-[protein] + ADP + H(+). The catalysed reaction is L-threonyl-[protein] + ATP = O-phospho-L-threonyl-[protein] + ADP + H(+). In terms of biological role, essential serine-protein kinase involved in the early stage of virion morphogenesis. In Vaccinia virus (strain Ankara) (VACV), this protein is Serine/threonine-protein kinase 2 (OPG054).